The sequence spans 317 residues: Apolipoprotein E (317 aa).

Residues 1 to 18 (MKVLWAALLVTFLAGCQA) form the signal peptide. Repeat copies occupy residues 80 to 101 (ALMD…EQLT), 102 to 123 (PVAE…ARLG), 124 to 145 (ADME…AMLG), 146 to 167 (QSTE…KRLL), 168 to 189 (RDAD…EGAE), 190 to 211 (RGVS…VRAA), 212 to 233 (TVGS…ERLR), and 234 to 255 (ARME…EQVA). Positions 80–255 (ALMDETMKEL…RLDEVKEQVA (176 aa)) are 8 X 22 AA approximate tandem repeats. Met143 is subject to Methionine sulfoxide. Residue Ser147 is modified to Phosphoserine. Positions 158–168 (HLRKLRKRLLR) are LDL and other lipoprotein receptors binding. 162-165 (LRKR) provides a ligand contact to heparin. The tract at residues 210 to 290 (AATVGSLAGQ…SWFEPLVEDM (81 aa)) is lipid-binding and lipoprotein association. 229 to 236 (GERLRARM) is a heparin binding site. Residues 266–317 (QQIRLQAEAFQARLKSWFEPLVEDMQRQWAGLVEKVQAAVGTSAAPVPSDNH) form a homooligomerization region. A specificity for association with VLDL region spans residues 278–290 (RLKSWFEPLVEDM).

The protein belongs to the apolipoprotein A1/A4/E family. As to quaternary structure, homotetramer. May interact with ABCA1; functionally associated with ABCA1 in the biogenesis of HDLs. May interact with APP/A4 amyloid-beta peptide; the interaction is extremely stable in vitro but its physiological significance is unclear. May interact with MAPT. May interact with MAP2. In the cerebrospinal fluid, interacts with secreted SORL1. Interacts with PMEL; this allows the loading of PMEL luminal fragment on ILVs to induce fibril nucleation. APOE exists as multiple glycosylated and sialylated glycoforms within cells and in plasma. The extent of glycosylation and sialylation are tissue and context specific. In terms of processing, glycated in plasma VLDL. Post-translationally, phosphorylated by FAM20C in the extracellular medium.

Its subcellular location is the secreted. The protein localises to the extracellular space. It localises to the extracellular matrix. The protein resides in the extracellular vesicle. It is found in the endosome. Its subcellular location is the multivesicular body. In terms of biological role, APOE is an apolipoprotein, a protein associating with lipid particles, that mainly functions in lipoprotein-mediated lipid transport between organs via the plasma and interstitial fluids. APOE is a core component of plasma lipoproteins and is involved in their production, conversion and clearance. Apolipoproteins are amphipathic molecules that interact both with lipids of the lipoprotein particle core and the aqueous environment of the plasma. As such, APOE associates with chylomicrons, chylomicron remnants, very low density lipoproteins (VLDL) and intermediate density lipoproteins (IDL) but shows a preferential binding to high-density lipoproteins (HDL). It also binds a wide range of cellular receptors including the LDL receptor/LDLR, the LDL receptor-related proteins LRP1, LRP2 and LRP8 and the very low-density lipoprotein receptor/VLDLR that mediate the cellular uptake of the APOE-containing lipoprotein particles. Finally, APOE also has a heparin-binding activity and binds heparan-sulfate proteoglycans on the surface of cells, a property that supports the capture and the receptor-mediated uptake of APOE-containing lipoproteins by cells. A main function of APOE is to mediate lipoprotein clearance through the uptake of chylomicrons, VLDLs, and HDLs by hepatocytes. APOE is also involved in the biosynthesis by the liver of VLDLs as well as their uptake by peripheral tissues ensuring the delivery of triglycerides and energy storage in muscle, heart and adipose tissues. By participating in the lipoprotein-mediated distribution of lipids among tissues, APOE plays a critical role in plasma and tissues lipid homeostasis. APOE is also involved in two steps of reverse cholesterol transport, the HDLs-mediated transport of cholesterol from peripheral tissues to the liver, and thereby plays an important role in cholesterol homeostasis. First, it is functionally associated with ABCA1 in the biogenesis of HDLs in tissues. Second, it is enriched in circulating HDLs and mediates their uptake by hepatocytes. APOE also plays an important role in lipid transport in the central nervous system, regulating neuron survival and sprouting. This Hylobates lar (Lar gibbon) protein is Apolipoprotein E (APOE).